A 257-amino-acid polypeptide reads, in one-letter code: MIHSRKLRLWLYLVLLAVFIGACGMKKEESSKDKQIKENFNKTLSLYPTKNLEDFYDKEGFRDEEFEKGDKGTWIIHSKMTIETNGKNMESRGLVLYVDRNTRTTKGEFIVRELWEDKKGYSRSKEKEYPVKMEHNKIIPTKPIADDKLRKEIEDFKFFVQYGDFKDINDYKDGDISYNPNVPSYSAKYQLSNNDYNVKQLRKRYDIPTKKAPKLLLKGDGDLKGSSIGHKNLEFIFIENKEENIYFTDSINFKPTE.

Positions 1-22 (MIHSRKLRLWLYLVLLAVFIGA) are cleaved as a signal peptide. Cysteine 23 carries N-palmitoyl cysteine lipidation. The S-diacylglycerol cysteine moiety is linked to residue cysteine 23.

Belongs to the staphylococcal tandem lipoprotein family.

The protein resides in the cell membrane. This is an uncharacterized protein from Staphylococcus aureus (strain Mu50 / ATCC 700699).